The sequence spans 172 residues: Large ribosomal subunit protein uL10 (172 aa).

It belongs to the universal ribosomal protein uL10 family. In terms of assembly, part of the ribosomal stalk of the 50S ribosomal subunit. The N-terminus interacts with L11 and the large rRNA to form the base of the stalk. The C-terminus forms an elongated spine to which L12 dimers bind in a sequential fashion forming a multimeric L10(L12)X complex.

Functionally, forms part of the ribosomal stalk, playing a central role in the interaction of the ribosome with GTP-bound translation factors. The polypeptide is Large ribosomal subunit protein uL10 (Brucella suis (strain ATCC 23445 / NCTC 10510)).